The primary structure comprises 206 residues: Thiamine-phosphate synthase (206 aa).

Residues 38–42 (QLRAK) and asparagine 70 each bind 4-amino-2-methyl-5-(diphosphooxymethyl)pyrimidine. Mg(2+)-binding residues include aspartate 71 and aspartate 90. Serine 107 contacts 4-amino-2-methyl-5-(diphosphooxymethyl)pyrimidine. Residue 133–135 (TTT) coordinates 2-[(2R,5Z)-2-carboxy-4-methylthiazol-5(2H)-ylidene]ethyl phosphate. Residue lysine 136 participates in 4-amino-2-methyl-5-(diphosphooxymethyl)pyrimidine binding. 2-[(2R,5Z)-2-carboxy-4-methylthiazol-5(2H)-ylidene]ethyl phosphate contacts are provided by residues glycine 164 and 184–185 (VS).

The protein belongs to the thiamine-phosphate synthase family. It depends on Mg(2+) as a cofactor.

The enzyme catalyses 2-[(2R,5Z)-2-carboxy-4-methylthiazol-5(2H)-ylidene]ethyl phosphate + 4-amino-2-methyl-5-(diphosphooxymethyl)pyrimidine + 2 H(+) = thiamine phosphate + CO2 + diphosphate. The catalysed reaction is 2-(2-carboxy-4-methylthiazol-5-yl)ethyl phosphate + 4-amino-2-methyl-5-(diphosphooxymethyl)pyrimidine + 2 H(+) = thiamine phosphate + CO2 + diphosphate. It catalyses the reaction 4-methyl-5-(2-phosphooxyethyl)-thiazole + 4-amino-2-methyl-5-(diphosphooxymethyl)pyrimidine + H(+) = thiamine phosphate + diphosphate. It participates in cofactor biosynthesis; thiamine diphosphate biosynthesis; thiamine phosphate from 4-amino-2-methyl-5-diphosphomethylpyrimidine and 4-methyl-5-(2-phosphoethyl)-thiazole: step 1/1. Its function is as follows. Condenses 4-methyl-5-(beta-hydroxyethyl)thiazole monophosphate (THZ-P) and 2-methyl-4-amino-5-hydroxymethyl pyrimidine pyrophosphate (HMP-PP) to form thiamine monophosphate (TMP). In Herpetosiphon aurantiacus (strain ATCC 23779 / DSM 785 / 114-95), this protein is Thiamine-phosphate synthase.